The sequence spans 202 residues: ATP-dependent Clp protease proteolytic subunit (202 aa).

S106 functions as the Nucleophile in the catalytic mechanism. H131 is an active-site residue.

The protein belongs to the peptidase S14 family. Fourteen ClpP subunits assemble into 2 heptameric rings which stack back to back to give a disk-like structure with a central cavity, resembling the structure of eukaryotic proteasomes.

Its subcellular location is the cytoplasm. The enzyme catalyses Hydrolysis of proteins to small peptides in the presence of ATP and magnesium. alpha-casein is the usual test substrate. In the absence of ATP, only oligopeptides shorter than five residues are hydrolyzed (such as succinyl-Leu-Tyr-|-NHMec, and Leu-Tyr-Leu-|-Tyr-Trp, in which cleavage of the -Tyr-|-Leu- and -Tyr-|-Trp bonds also occurs).. Cleaves peptides in various proteins in a process that requires ATP hydrolysis. Has a chymotrypsin-like activity. Plays a major role in the degradation of misfolded proteins. The chain is ATP-dependent Clp protease proteolytic subunit from Shewanella sp. (strain ANA-3).